The chain runs to 296 residues: Iron(3+)-hydroxamate-binding protein FhuD (296 aa).

The tat-type signal signal peptide spans 1–30; the sequence is MSGLPLISRRRLLTAMALSPLLWQMNTAHA. A Fe/B12 periplasmic-binding domain is found at 37–296; it reads RIVALEWLPV…VLDNAIGGKA (260 aa). Fe(III)-coprogen contacts are provided by Trp-68, Arg-84, Ser-103, Tyr-106, Phe-124, Trp-217, Trp-273, Phe-274, and Tyr-275.

It belongs to the bacterial solute-binding protein 8 family. As to quaternary structure, the complex is composed of two ATP-binding proteins (FhuC), a transmembrane protein (FhuB) and a solute-binding protein (FhuD). FhuD interacts with FhuB. Substrate-loaded FhuD binds FhuB more strongly than FhuD alone. In terms of processing, exported by the Tat system. The position of the signal peptide cleavage has been experimentally proven. Can also be exported by the Sec system.

Its subcellular location is the periplasm. Part of the ABC transporter complex FhuCDB involved in iron(3+)-hydroxamate import. Binds the iron(3+)-hydroxamate complex and transfers it to the membrane-bound permease. Required for the transport of all iron(3+)-hydroxamate siderophores such as ferrichrome, gallichrome, desferrioxamine, coprogen, aerobactin, shizokinen, rhodotorulic acid and the antibiotic albomycin. The sequence is that of Iron(3+)-hydroxamate-binding protein FhuD (fhuD) from Escherichia coli (strain K12).